A 329-amino-acid chain; its full sequence is tRNA-modifying protein YgfZ (329 aa).

Positions 32 and 190 each coordinate folate.

The protein belongs to the tRNA-modifying YgfZ family.

It is found in the cytoplasm. Functionally, folate-binding protein involved in regulating the level of ATP-DnaA and in the modification of some tRNAs. It is probably a key factor in regulatory networks that act via tRNA modification, such as initiation of chromosomal replication. This chain is tRNA-modifying protein YgfZ, found in Photobacterium profundum (strain SS9).